Reading from the N-terminus, the 576-residue chain is Rho GTPase-activating protein gacP (576 aa).

Residues 123-189 (LKSIIKTELK…RTNFERVGID (67 aa)) adopt a coiled-coil conformation. The 186-residue stretch at 277–462 (EDLSVLLNRE…TIIQNFDRIF (186 aa)) folds into the Rho-GAP domain. The interval 472 to 576 (VPDTYVPPPN…DEGDAVELSD (105 aa)) is disordered. Low complexity predominate over residues 482-500 (NTRNNSVNNFNNVQPSSFS). The span at 501-513 (ASTSRSINLNKST) shows a compositional bias: polar residues. Over residues 514–530 (NNPNINDDNNNNNNINN) the composition is skewed to low complexity. Acidic residues predominate over residues 565-576 (SFDEGDAVELSD).

Its subcellular location is the cytoplasm. In terms of biological role, rho GTPase-activating protein involved in the signal transduction pathway. In Dictyostelium discoideum (Social amoeba), this protein is Rho GTPase-activating protein gacP (gacP).